The chain runs to 143 residues: MESTLGSDLARLVRVWRALIDHRLKPLELTQTHWVTLYNINRLPPEQSQIQLAKAIGIEQPSLVRTLDQLEEKGLITRHTCANDRRAKRIKLTEQSSPIIEQVDGVICSTRKEILGGISSDEIAVLSGLIDKLEKNIIQLQTK.

Residues 2–135 form the HTH marR-type domain; that stretch reads ESTLGSDLAR…LSGLIDKLEK (134 aa). The segment at residues 49–72 is a DNA-binding region (H-T-H motif); the sequence is QIQLAKAIGIEQPSLVRTLDQLEE.

It belongs to the SlyA family. Homodimer.

Transcription regulator that can specifically activate or repress expression of target genes. In Yersinia pestis (strain Pestoides F), this protein is Transcriptional regulator SlyA.